The following is a 450-amino-acid chain: Cysteine proteinase (450 aa).

An N-terminal signal peptide occupies residues 1–20 (MPRTEMVRFVRLPVVLLAMA). A propeptide spans 21–125 (ACLASVALGS…RKTVNVTTGR (105 aa)) (activation peptide). Asn120 carries N-linked (GlcNAc...) asparagine glycosylation. Residues Cys147 and Cys188 are joined by a disulfide bond. Active-site residues include Cys150, His287, and Asn307. Residues 343–450 (TPPPPPPPPP…TKAARLVPHQ (108 aa)) form a 108-residue extension region. Asn397 is a glycosylation site (N-linked (GlcNAc...) asparagine).

This sequence belongs to the peptidase C1 family.

It is found in the lysosome. The cysteine proteinases have a potential role in host-parasite interaction and virulence. This is Cysteine proteinase from Trypanosoma brucei brucei.